A 127-amino-acid chain; its full sequence is Large ribosomal subunit protein uL24B (127 aa).

The protein belongs to the universal ribosomal protein uL24 family. In terms of assembly, component of the large ribosomal subunit (LSU). Mature yeast ribosomes consist of a small (40S) and a large (60S) subunit. The 40S small subunit contains 1 molecule of ribosomal RNA (18S rRNA) and 33 different proteins (encoded by 57 genes). The large 60S subunit contains 3 rRNA molecules (25S, 5.8S and 5S rRNA) and 46 different proteins (encoded by 81 genes).

Its subcellular location is the cytoplasm. Component of the ribosome, a large ribonucleoprotein complex responsible for the synthesis of proteins in the cell. The small ribosomal subunit (SSU) binds messenger RNAs (mRNAs) and translates the encoded message by selecting cognate aminoacyl-transfer RNA (tRNA) molecules. The large subunit (LSU) contains the ribosomal catalytic site termed the peptidyl transferase center (PTC), which catalyzes the formation of peptide bonds, thereby polymerizing the amino acids delivered by tRNAs into a polypeptide chain. The nascent polypeptides leave the ribosome through a tunnel in the LSU and interact with protein factors that function in enzymatic processing, targeting, and the membrane insertion of nascent chains at the exit of the ribosomal tunnel. This chain is Large ribosomal subunit protein uL24B, found in Saccharomyces cerevisiae (strain ATCC 204508 / S288c) (Baker's yeast).